We begin with the raw amino-acid sequence, 142 residues long: Glia maturation factor beta (142 aa).

Ser2 bears the N-acetylserine mark. Residues 4-139 (SLVVCDVAED…TEEWLREKLG (136 aa)) enclose the ADF-H domain.

This sequence belongs to the actin-binding proteins ADF family. GMF subfamily. Phosphorylated; stimulated by phorbol ester.

This protein causes differentiation of brain cells, stimulation of neural regeneration, and inhibition of proliferation of tumor cells. This is Glia maturation factor beta (Gmfb) from Rattus norvegicus (Rat).